Reading from the N-terminus, the 564-residue chain is Forkhead transcription factor HCM1 (564 aa).

The tract at residues 33–80 (DEKEMITPPSSTVRKTMKEVNKRPSHPLSPDHSSPIAPSKAKRQRSDT) is disordered. The span at 58-67 (HPLSPDHSSP) shows a compositional bias: low complexity. Residues 108 to 199 (KKPPYSYATL…KFFKGENRGY (92 aa)) constitute a DNA-binding region (fork-head). Residues 224-241 (QVESGEGNDDLPDEEERE) are compositionally biased toward acidic residues. Positions 224 to 246 (QVESGEGNDDLPDEEEREEAGKF) are disordered. Thr-342 bears the Phosphothreonine mark. A disordered region spans residues 401–448 (SKPQSQQSYSNSQLPPPPSSHGSDLLKTPKMRHSDGLEKTPSRLISTP). Over residues 402 to 413 (KPQSQQSYSNSQ) the composition is skewed to polar residues. A compositionally biased stretch (basic and acidic residues) spans 432 to 441 (RHSDGLEKTP). Position 496 is a phosphoserine (Ser-496). A disordered region spans residues 536 to 564 (SDGNNTTDSNQKHHPYHNHPSNDSGNEKN). Over residues 554-564 (HPSNDSGNEKN) the composition is skewed to polar residues.

Post-translationally, phosphorylated by CDK1.

The protein localises to the cytoplasm. It localises to the nucleus. In terms of biological role, transcription factor regulating the cell cycle specific transcription of a spindle pole body (SPB) calmodulin binding protein SPC110. Required for full induction of SPC110 transcription in late G1. Binds to DNA consensus sequence 5'-[AT]AA[TC]AAACAA[AT]-3'. Dosage dependent suppressor of calmodulin mutants which have specific defects in SPB assembly. The chain is Forkhead transcription factor HCM1 (HCM1) from Saccharomyces cerevisiae (strain ATCC 204508 / S288c) (Baker's yeast).